Reading from the N-terminus, the 354-residue chain is Putrescine/cadaverine-binding protein (354 aa).

Residues 1 to 20 (MMKKLLLVATLMAGAAQATA) form the signal peptide.

Belongs to the bacterial solute-binding protein 1 family.

It localises to the periplasm. In terms of biological role, binds putrescine and cadaverine. The chain is Putrescine/cadaverine-binding protein from Pseudomonas aeruginosa (strain ATCC 15692 / DSM 22644 / CIP 104116 / JCM 14847 / LMG 12228 / 1C / PRS 101 / PAO1).